Consider the following 51-residue polypeptide: Large ribosomal subunit protein bL33 (51 aa).

The protein belongs to the bacterial ribosomal protein bL33 family.

The sequence is that of Large ribosomal subunit protein bL33 from Colwellia psychrerythraea (strain 34H / ATCC BAA-681) (Vibrio psychroerythus).